A 362-amino-acid polypeptide reads, in one-letter code: Cationic peroxidase SPC4 (362 aa).

A signal peptide spans 1-31 (MSRAPTLAAAAAVAAVVLICSSSTATAADGN). Intrachain disulfides connect C50/C131, C83/C88, C138/C333, and C218/C245. H81 (proton acceptor) is an active-site residue. D82, V85, G87, D89, and S91 together coordinate Ca(2+). An N-linked (GlcNAc...) asparagine glycan is attached at N109. T111 is a binding site for (indol-3-yl)acetate. P181 contacts substrate. H211 is a heme b binding site. T212 is a Ca(2+) binding site. N-linked (GlcNAc...) asparagine glycosylation is present at N234. Ca(2+) contacts are provided by D257, T260, A263, and D265. N332 carries an N-linked (GlcNAc...) asparagine glycan.

Belongs to the peroxidase family. Classical plant (class III) peroxidase subfamily. As to quaternary structure, monomer. Requires heme b as cofactor. Ca(2+) serves as cofactor. In terms of processing, the proportions of glycoforms I and II are 35% and 65% respectively. As to expression, present in germinated and ungerminated grain, seedlings, and leaves and stem of the mature plant.

It is found in the secreted. It carries out the reaction 2 a phenolic donor + H2O2 = 2 a phenolic radical donor + 2 H2O. Its function is as follows. Removal of H(2)O(2), oxidation of toxic reductants, biosynthesis and degradation of lignin, suberization, auxin catabolism, response to environmental stresses such as wounding, pathogen attack and oxidative stress. These functions might be dependent on each isozyme/isoform in each plant tissue. Has a high preference for hydroxycinnamates as substrates. Substrate preference is ferulic acid &gt; p-coumaric acid &gt; N-acetyl tyrosine methyl ester &gt; N-acetyl-tyrosine &gt; tyrosine &gt; catechol &gt; Gly-Tyr-Gly. May be involved in the formation of diferulate linkages in the plant cell wall. The protein is Cationic peroxidase SPC4 of Sorghum bicolor (Sorghum).